The chain runs to 203 residues: Urease accessory protein UreG (203 aa).

14–21 lines the GTP pocket; the sequence is GPVGSGKT.

The protein belongs to the SIMIBI class G3E GTPase family. UreG subfamily. Homodimer. UreD, UreF and UreG form a complex that acts as a GTP-hydrolysis-dependent molecular chaperone, activating the urease apoprotein by helping to assemble the nickel containing metallocenter of UreC. The UreE protein probably delivers the nickel.

It is found in the cytoplasm. Functionally, facilitates the functional incorporation of the urease nickel metallocenter. This process requires GTP hydrolysis, probably effectuated by UreG. The sequence is that of Urease accessory protein UreG from Rhizobium leguminosarum bv. trifolii (strain WSM2304).